Consider the following 1382-residue polypeptide: Hepatocyte growth factor receptor (1382 aa).

The signal sequence occupies residues 1-24 (MRAPAVLAPGILVLLFTLVQRSCG). Residues 25–933 (ECKEALVKSE…VIVQPDQNFT (909 aa)) lie on the Extracellular side of the membrane. The Sema domain occupies 27 to 516 (KEALVKSEMN…TGKKITKIPL (490 aa)). N-linked (GlcNAc...) asparagine glycosylation occurs at Asn-45. Disulfide bonds link Cys-95/Cys-101, Cys-98/Cys-160, Cys-133/Cys-141, and Cys-173/Cys-176. N-linked (GlcNAc...) asparagine glycosylation occurs at Asn-106. Asn-203 and Asn-359 each carry an N-linked (GlcNAc...) asparagine glycan. Cystine bridges form between Cys-299/Cys-364 and Cys-386/Cys-398. 2 N-linked (GlcNAc...) asparagine glycosylation sites follow: Asn-400 and Asn-406. Intrachain disulfides connect Cys-521–Cys-539, Cys-527–Cys-562, Cys-530–Cys-546, and Cys-542–Cys-552. 3 consecutive IPT/TIG domains span residues 564–656 (PTIY…FSYV), 658–740 (PIIT…FSYQ), and 743–837 (PIVY…LIYV). Thr-583 carries O-linked (Man) threonine glycosylation. N-linked (GlcNAc...) asparagine glycosylation is found at Asn-608 and Asn-636. O-linked (Man) threonine glycans are attached at residues Thr-677 and Thr-762. N-linked (GlcNAc...) asparagine glycans are attached at residues Asn-786, Asn-880, and Asn-931. A helical transmembrane segment spans residues 934–956 (GLIVGVISISLIVLLLLGLFLWL). At 957 to 1382 (KRRKQIKDLG…QDIIDGEGDT (426 aa)) the chain is on the cytoplasmic side. Phosphoserine is present on Ser-967. Thr-978 bears the Phosphothreonine mark. Phosphoserine is present on residues Ser-991, Ser-998, and Ser-1001. Tyr-1004 carries the phosphotyrosine modification. One can recognise a Protein kinase domain in the interval 1079-1346 (VHFNEVIGRG…RISAIFSTFI (268 aa)). Residues 1085 to 1093 (IGRGHFGCV) and Lys-1111 each bind ATP. Residue Asp-1205 is the Proton acceptor of the active site. The interval 1213-1382 (LDEKFTVKVA…QDIIDGEGDT (170 aa)) is interaction with RANBP9. Tyr-1231 is modified (phosphotyrosine). Phosphotyrosine; by autocatalysis is present on residues Tyr-1235 and Tyr-1236. Residue Thr-1290 is modified to Phosphothreonine. The tract at residues 1321–1360 (WHPKAELRPSFSELVSRISAIFSTFIGEHYVHVNATYVNV) is interaction with MUC20. 2 positions are modified to phosphotyrosine; by autocatalysis: Tyr-1350 and Tyr-1357. Position 1366 is a phosphotyrosine (Tyr-1366).

This sequence belongs to the protein kinase superfamily. Tyr protein kinase family. As to quaternary structure, heterodimer made of an alpha chain (50 kDa) and a beta chain (145 kDa) which are disulfide linked. Binds PLXNB1. Interacts when phosphorylated with downstream effectors including STAT3, PIK3R1, SRC, PCLG1, GRB2 and GAB1. Interacts with SPSB1, SPSB2 and SPSB4. Interacts with INPP5D/SHIP1. When phosphorylated at Tyr-1357, interacts with INPPL1/SHIP2. Interacts with RANBP9 and RANBP10, as well as SPSB1, SPSB2, SPSB3 and SPSB4. SPSB1 binding occurs in the presence and in the absence of HGF, however HGF treatment has a positive effect on this interaction. Interacts with MUC20; prevents interaction with GRB2 and suppresses hepatocyte growth factor-induced cell proliferation. Interacts with GRB10. Interacts with PTPN1 and PTPN2. Interacts with HSP90AA1 and HSP90AB1; the interaction suppresses MET kinase activity. Interacts with tensin TNS3. Interacts (when phosphorylated) with tensin TNS4 (via SH2 domain); the interaction increases MET protein stability by inhibiting MET endocytosis and subsequent lysosomal degradation. In terms of processing, autophosphorylated in response to ligand binding on Tyr-1235 and Tyr-1236 in the kinase domain leading to further phosphorylation of Tyr-1350 and Tyr-1357 in the C-terminal multifunctional docking site. Dephosphorylated by PTPRJ at Tyr-1350 and Tyr-1366. Dephosphorylated by PTPN1 and PTPN2. Ubiquitinated. Ubiquitination by CBL regulates the receptor stability and activity through proteasomal degradation. Post-translationally, O-mannosylation of IPT/TIG domains by TMEM260 is required for protein maturation. O-mannosylated residues are composed of single mannose glycans that are not elongated or modified.

It localises to the membrane. The enzyme catalyses L-tyrosyl-[protein] + ATP = O-phospho-L-tyrosyl-[protein] + ADP + H(+). Its activity is regulated as follows. In its inactive state, the C-terminal tail interacts with the catalytic domain and inhibits the kinase activity. Upon ligand binding, the C-terminal tail is displaced and becomes phosphorylated, thus increasing the kinase activity. Receptor tyrosine kinase that transduces signals from the extracellular matrix into the cytoplasm by binding to hepatocyte growth factor/HGF ligand. Regulates many physiological processes including proliferation, scattering, morphogenesis and survival. Ligand binding at the cell surface induces autophosphorylation of MET on its intracellular domain that provides docking sites for downstream signaling molecules. Following activation by ligand, interacts with the PI3-kinase subunit PIK3R1, PLCG1, SRC, GRB2, STAT3 or the adapter GAB1. Recruitment of these downstream effectors by MET leads to the activation of several signaling cascades including the RAS-ERK, PI3 kinase-AKT, or PLCgamma-PKC. The RAS-ERK activation is associated with the morphogenetic effects while PI3K/AKT coordinates prosurvival effects. During embryonic development, MET signaling plays a role in gastrulation, development and migration of muscles and neuronal precursors, angiogenesis and kidney formation. In adults, participates in wound healing as well as organ regeneration and tissue remodeling. Also promotes differentiation and proliferation of hematopoietic cells. This Mustela putorius furo (European domestic ferret) protein is Hepatocyte growth factor receptor (MET).